Reading from the N-terminus, the 1126-residue chain is Translation initiation factor IF-2 (1126 aa).

A disordered region spans residues 63–519 (LSINKPSIKK…TTRQRQKRRA (457 aa)). Basic and acidic residues predominate over residues 70–83 (IKKDNFKQNKEDKS). Residues 93 to 111 (PLKNNSNKKPLLIKPLNKP) show a composition bias toward low complexity. Residues 116–151 (KISNQLQNPNKPNIVNSSQSRANLTNTNSKPSQNFN) are compositionally biased toward polar residues. Residues 161–171 (TPPPIKSPAKP) show a composition bias toward pro residues. The segment covering 181–195 (NINNNVKSSESSQNI) has biased composition (polar residues). Low complexity-rich tracts occupy residues 211–224 (NTNK…NNRK) and 240–252 (IINP…NKQN). Positions 254–264 (AFKQTASNRPG) are enriched in polar residues. 2 stretches are compositionally biased toward low complexity: residues 291 to 315 (NRQG…GLRN) and 327 to 349 (NRQG…NRPG). Residues 429 to 443 (GKTDWDDSAKLEALR) are compositionally biased toward basic and acidic residues. Basic residues predominate over residues 501–517 (KQFKKKKKETTRQRQKR). In terms of domain architecture, tr-type G spans 618 to 790 (RRPPVITVMG…ILLVSDVEDL (173 aa)). The tract at residues 627 to 634 (GHVDHGKT) is G1. Position 627–634 (627–634 (GHVDHGKT)) interacts with GTP. A G2 region spans residues 652–656 (GITQH). The tract at residues 677-680 (DTPG) is G3. GTP is bound by residues 677–681 (DTPGH) and 731–734 (NKID). The tract at residues 731–734 (NKID) is G4. The G5 stretch occupies residues 767–769 (SAI).

It belongs to the TRAFAC class translation factor GTPase superfamily. Classic translation factor GTPase family. IF-2 subfamily.

It localises to the cytoplasm. One of the essential components for the initiation of protein synthesis. Protects formylmethionyl-tRNA from spontaneous hydrolysis and promotes its binding to the 30S ribosomal subunits. Also involved in the hydrolysis of GTP during the formation of the 70S ribosomal complex. This Prochlorococcus marinus (strain AS9601) protein is Translation initiation factor IF-2.